Here is a 492-residue protein sequence, read N- to C-terminus: Probable Xaa-Pro aminopeptidase AO090005001240 (492 aa).

The Mn(2+) site is built by Asp272, Asp283, Glu420, and Glu459.

It belongs to the peptidase M24B family. Mn(2+) is required as a cofactor.

The enzyme catalyses Release of any N-terminal amino acid, including proline, that is linked to proline, even from a dipeptide or tripeptide.. Catalyzes the removal of a penultimate prolyl residue from the N-termini of peptides. This chain is Probable Xaa-Pro aminopeptidase AO090005001240, found in Aspergillus oryzae (strain ATCC 42149 / RIB 40) (Yellow koji mold).